We begin with the raw amino-acid sequence, 973 residues long: Translation initiation factor IF-2 (973 aa).

Residues 52–388 form a disordered region; it reads PDQEEVKPAA…QAQKPAQPLE (337 aa). Composition is skewed to basic and acidic residues over residues 83–120, 128–148, 157–172, 186–202, 210–246, 272–288, 314–333, and 343–360; these read ESRK…DHYK, VPSR…DKAR, QGAR…ERTR, VQQE…RPPF, PQHE…DKGA, RAGE…ETKP, LLDD…EKQK, and KSRE…ERLR. Over residues 374-386 the composition is skewed to low complexity; the sequence is AKPQEQAQKPAQP. Residues 472-641 enclose the tr-type G domain; sequence DRPCVVTVMG…LLVAEMSELK (170 aa). Residues 481–488 form a G1 region; it reads GHVDHGKT. A GTP-binding site is contributed by 481–488; the sequence is GHVDHGKT. The tract at residues 506–510 is G2; it reads GITQH. Residues 527–530 are G3; the sequence is DTPG. GTP contacts are provided by residues 527 to 531 and 581 to 584; these read DTPGH and NKID. The segment at 581-584 is G4; sequence NKID. A G5 region spans residues 617–619; the sequence is SAL.

This sequence belongs to the TRAFAC class translation factor GTPase superfamily. Classic translation factor GTPase family. IF-2 subfamily.

It is found in the cytoplasm. One of the essential components for the initiation of protein synthesis. Protects formylmethionyl-tRNA from spontaneous hydrolysis and promotes its binding to the 30S ribosomal subunits. Also involved in the hydrolysis of GTP during the formation of the 70S ribosomal complex. The sequence is that of Translation initiation factor IF-2 from Pelotomaculum thermopropionicum (strain DSM 13744 / JCM 10971 / SI).